The chain runs to 156 residues: 6,7-dimethyl-8-ribityllumazine synthase (156 aa).

5-amino-6-(D-ribitylamino)uracil contacts are provided by residues Phe22, 57–59 (AYE), and 81–83 (TVI). 86–87 (GT) lines the (2S)-2-hydroxy-3-oxobutyl phosphate pocket. The Proton donor role is filled by His89. A 5-amino-6-(D-ribitylamino)uracil-binding site is contributed by Phe114. Arg128 serves as a coordination point for (2S)-2-hydroxy-3-oxobutyl phosphate.

This sequence belongs to the DMRL synthase family. As to quaternary structure, forms an icosahedral capsid composed of 60 subunits, arranged as a dodecamer of pentamers.

The catalysed reaction is (2S)-2-hydroxy-3-oxobutyl phosphate + 5-amino-6-(D-ribitylamino)uracil = 6,7-dimethyl-8-(1-D-ribityl)lumazine + phosphate + 2 H2O + H(+). The protein operates within cofactor biosynthesis; riboflavin biosynthesis; riboflavin from 2-hydroxy-3-oxobutyl phosphate and 5-amino-6-(D-ribitylamino)uracil: step 1/2. Functionally, catalyzes the formation of 6,7-dimethyl-8-ribityllumazine by condensation of 5-amino-6-(D-ribitylamino)uracil with 3,4-dihydroxy-2-butanone 4-phosphate. This is the penultimate step in the biosynthesis of riboflavin. The chain is 6,7-dimethyl-8-ribityllumazine synthase from Sodalis glossinidius (strain morsitans).